We begin with the raw amino-acid sequence, 813 residues long: Nuclear pore complex protein 5 (813 aa).

This sequence belongs to the nucleoporin Nup84/Nup107 family. In terms of assembly, part of the nuclear pore complex (NPC). May interact with mdf-1.

It localises to the nucleus. It is found in the nuclear pore complex. Its subcellular location is the chromosome. The protein localises to the centromere. The protein resides in the kinetochore. It localises to the nucleus membrane. In terms of biological role, involved in kinetochore assembly and chromosome segregation during embryonic mitosis. Required for the localization of the NDC80 complex member him-10, the chromosomal passenger complex component air-2 and nuclear pore complex proteins npp-23 and npp-15 to kinetochores during metaphase. Required for npp-23 localization to the nuclear envelope during interphase. Recruits mdf-1, a component of the spindle assembly checkpoint, to the nuclear envelope. Appears dispensable for the assembly of the nuclear pore complex and for nuclear protein import. The sequence is that of Nuclear pore complex protein 5 from Caenorhabditis elegans.